Reading from the N-terminus, the 255-residue chain is Enkurin (255 aa).

Residues 1–10 (MDSPCTSESI) show a composition bias toward polar residues. Disordered regions lie at residues 1 to 25 (MDSP…PQHP) and 67 to 96 (SKEK…DHPV). Over residues 73 to 83 (PPKKKFNRCSP) the composition is skewed to basic residues. The SH3-binding motif lies at 83–89 (PKKPAVP). An Enkurin domain is found at 160 to 252 (KRNEDVKKAQ…VIEKHKIIYI (93 aa)). Positions 160-255 (KRNEDVKKAQ…KHKIIYIANK (96 aa)) are interaction with TRPC proteins. The region spanning 176–187 (IQENLKKAAMKR) is the IQ domain.

In terms of assembly, microtubule inner protein component of sperm flagellar doublet microtubules. Binds calmodulin via its IQ domain. Interacts with TRPC1, TRPC2, TRPC5, but not TRPC3. Interacts with CFAP45. In terms of tissue distribution, high expression in testis and vomeronasal organ and lower expression in ovary, heart, lung, and brain. Not expressed in other tissues.

The protein resides in the cytoplasm. The protein localises to the cytoskeleton. Its subcellular location is the cilium axoneme. It is found in the flagellum axoneme. Adapter that functions to localize a calcium-sensitive signal transduction machinery in sperm to a calcium-permeable ion channel. Microtubule inner protein (MIP) part of the dynein-decorated doublet microtubules (DMTs) in cilia axoneme, which is required for motile cilia beating. The chain is Enkurin (Enkur) from Mus musculus (Mouse).